The sequence spans 252 residues: 3-dehydroquinate dehydratase (252 aa).

3-dehydroquinate contacts are provided by residues Ser-21, Glu-46–Arg-48, and Arg-82. His-143 functions as the Proton donor/acceptor in the catalytic mechanism. Lys-170 (schiff-base intermediate with substrate) is an active-site residue. 3-dehydroquinate is bound by residues Arg-213, Ser-232, and Gln-236.

The protein belongs to the type-I 3-dehydroquinase family. As to quaternary structure, homodimer.

The enzyme catalyses 3-dehydroquinate = 3-dehydroshikimate + H2O. The protein operates within metabolic intermediate biosynthesis; chorismate biosynthesis; chorismate from D-erythrose 4-phosphate and phosphoenolpyruvate: step 3/7. Involved in the third step of the chorismate pathway, which leads to the biosynthesis of aromatic amino acids. Catalyzes the cis-dehydration of 3-dehydroquinate (DHQ) and introduces the first double bond of the aromatic ring to yield 3-dehydroshikimate. The protein is 3-dehydroquinate dehydratase of Salmonella paratyphi A (strain ATCC 9150 / SARB42).